We begin with the raw amino-acid sequence, 1563 residues long: Ribulose bisphosphate carboxylase (1563 aa).

Substrate-binding residues include H32 and S79. The propeptide at 197-217 is linker; that stretch reads LAAAFVGASTTRKASSVARRA. N328 is a substrate binding site. Residue K383 is the Proton acceptor of the active site. Position 385 (K385) interacts with substrate. 3 residues coordinate Mg(2+): K408, D410, and E411. Position 408 is an N6-carboxylysine (K408). Residue H504 is the Proton acceptor of the active site. Substrate-binding residues include R505, H538, and S585. A propeptide spans 703-723 (linker); it reads LAAAFVGASTTRKASSVARRA. N834 contacts substrate. The Proton acceptor role is filled by K889. Residue K891 participates in substrate binding. Positions 914, 916, and 917 each coordinate Mg(2+). K914 is modified (N6-carboxylysine). Catalysis depends on H1010, which acts as the Proton acceptor. Substrate is bound by residues R1011, H1044, and S1091. Positions 1209-1229 are cleaved as a propeptide — linker; it reads LAAAFVGASTTRKASSVARRA. N1340 contacts substrate. K1395 (proton acceptor) is an active-site residue. A substrate-binding site is contributed by K1397. Mg(2+) contacts are provided by K1420, D1422, and E1423. Residue K1420 is modified to N6-carboxylysine. The active-site Proton acceptor is H1516. Substrate-binding residues include R1517 and H1550.

It belongs to the RuBisCO large chain family. Type II subfamily. Homodimer. The cofactor is Mg(2+). In Western blots an approximately 220 kDa polyprotein and 2 smaller proteins of about 55 and 52 kDa are detected, suggesting the polyprotein may be cleaved at one end of the linker and then at the other end to give mature RuBisCO.

It localises to the plastid. The protein resides in the chloroplast. It carries out the reaction 2 (2R)-3-phosphoglycerate + 2 H(+) = D-ribulose 1,5-bisphosphate + CO2 + H2O. It catalyses the reaction D-ribulose 1,5-bisphosphate + O2 = 2-phosphoglycolate + (2R)-3-phosphoglycerate + 2 H(+). Its function is as follows. RuBisCO catalyzes two reactions: the carboxylation of D-ribulose 1,5-bisphosphate, the primary event in carbon dioxide fixation, as well as the oxidative fragmentation of the pentose substrate. Both reactions occur simultaneously and in competition at the same active site. The chain is Ribulose bisphosphate carboxylase (rbcL) from Prorocentrum minimum (Dinoflagellate).